The sequence spans 413 residues: Putative competence-damage inducible protein (413 aa).

It belongs to the CinA family.

The polypeptide is Putative competence-damage inducible protein (Alkaliphilus oremlandii (strain OhILAs) (Clostridium oremlandii (strain OhILAs))).